The following is an 836-amino-acid chain: MSDTDGKKPLGLGGGSRSGQVKQSFSHGRTKSVLVETKRKRVVVPKPGASGSSTTTSSPSHLGDPAKRPAGISDAEMERRLAALRAAKLREVEDAKRRADEERQREEERQRRREELEAKEREERERAEALRQKAEDEERARREAEEATRRAEEAKRAPAPAAPQPAPAESRASAPPSAKPGLPPSRKEREREADRDRTTKKDDSRRSGKLTLNEALSGEGGRTRSLAAMKRKQEKARQKAMGFGHKAEKQVRDVQLPETILVQELANRMAERAADVVKALMKMGMMVTMNQSIDADTAELVIEEFGHRAVRVSDADVEHVIDTVEDKAEDLQPRPPIITIMGHVDHGKTSLLDAIRKTSVVSGEAGGITQHIGAYQVKTESGAVLTFLDTPGHAAFTSMRARGAQVTDIVVLVVAADDAVMPQTVEAIKHAKAAKVPMIVAINKIDKPDADPNKVRTDLLQHEVIVEKMSGDVLDVEVSAKTGLGLDELLENIALQAEILDLRANPSRQAQGAVIEAKLDVGRGPVATVLVQYGTLKRGDIFVVGQQWGKVRALINDKGERVDEAGPSVPVEVLGLNGTPEAGDVLNVVETEAQAREIADYREKAARDKRAAAGAATTLEQLMAKAKADADVAELPVVIKADVQGSAEAIVQALEKVGNDEVRVRVLHYGVGAITETDITLAEASQAAVIGFNVRANASARQAANQKSVEIRYYSVIYDLVDDVKKAASGLLKAEVREHFIGYAQIKEVFRITGVGNVAGCIVTEGVARRSAGVRLLRDNVVIHEGTLKTLKRFKDEVKEVQSGQECGMAFERYEDIRPGDVIEIFEREEVQRKLA.

Positions 1-234 (MSDTDGKKPL…SLAAMKRKQE (234 aa)) are disordered. Polar residues predominate over residues 18–27 (SGQVKQSFSH). The segment covering 50–60 (SGSSTTTSSPS) has biased composition (low complexity). Residues 88–156 (KLREVEDAKR…ATRRAEEAKR (69 aa)) show a composition bias toward basic and acidic residues. Positions 167-176 (PAESRASAPP) are enriched in low complexity. Residues 185-206 (SRKEREREADRDRTTKKDDSRR) are compositionally biased toward basic and acidic residues. Residues 333–501 (PRPPIITIMG…NIALQAEILD (169 aa)) enclose the tr-type G domain. The G1 stretch occupies residues 342–349 (GHVDHGKT). Residue 342–349 (GHVDHGKT) coordinates GTP. Residues 367–371 (GITQH) are G2. The tract at residues 389 to 392 (DTPG) is G3. GTP contacts are provided by residues 389 to 393 (DTPGH) and 443 to 446 (NKID). A G4 region spans residues 443 to 446 (NKID). The segment at 479–481 (SAK) is G5.

It belongs to the TRAFAC class translation factor GTPase superfamily. Classic translation factor GTPase family. IF-2 subfamily.

Its subcellular location is the cytoplasm. One of the essential components for the initiation of protein synthesis. Protects formylmethionyl-tRNA from spontaneous hydrolysis and promotes its binding to the 30S ribosomal subunits. Also involved in the hydrolysis of GTP during the formation of the 70S ribosomal complex. In Cereibacter sphaeroides (strain ATCC 17029 / ATH 2.4.9) (Rhodobacter sphaeroides), this protein is Translation initiation factor IF-2.